Here is a 418-residue protein sequence, read N- to C-terminus: Gamma-glutamyl phosphate reductase (418 aa).

Belongs to the gamma-glutamyl phosphate reductase family.

Its subcellular location is the cytoplasm. The catalysed reaction is L-glutamate 5-semialdehyde + phosphate + NADP(+) = L-glutamyl 5-phosphate + NADPH + H(+). It participates in amino-acid biosynthesis; L-proline biosynthesis; L-glutamate 5-semialdehyde from L-glutamate: step 2/2. Functionally, catalyzes the NADPH-dependent reduction of L-glutamate 5-phosphate into L-glutamate 5-semialdehyde and phosphate. The product spontaneously undergoes cyclization to form 1-pyrroline-5-carboxylate. The sequence is that of Gamma-glutamyl phosphate reductase from Citrifermentans bemidjiense (strain ATCC BAA-1014 / DSM 16622 / JCM 12645 / Bem) (Geobacter bemidjiensis).